The primary structure comprises 876 residues: Leucine--tRNA ligase (876 aa).

A 'HIGH' region motif is present at residues 42–52 (PYPSGKLHMGH). Residues 634–638 (KMSKS) carry the 'KMSKS' region motif. Residue Lys637 participates in ATP binding.

This sequence belongs to the class-I aminoacyl-tRNA synthetase family.

Its subcellular location is the cytoplasm. It carries out the reaction tRNA(Leu) + L-leucine + ATP = L-leucyl-tRNA(Leu) + AMP + diphosphate. The sequence is that of Leucine--tRNA ligase from Neisseria gonorrhoeae (strain ATCC 700825 / FA 1090).